We begin with the raw amino-acid sequence, 417 residues long: Phosphoglycerate kinase 1 (417 aa).

S2 is modified (N-acetylserine). 2 positions are modified to phosphoserine: S2 and S4. K6 carries the N6-succinyllysine modification. Residue K11 is modified to N6-acetyllysine. V23, D24, F25, N26, Q38, and R39 together coordinate (2R)-3-phosphoglycerate. The segment at 38–43 (QRIKAA) is mitochondrial targeting region exposed following cis-trans isomerization by PIN1 and recognized by the TOM complex for mitochondrial translocation of the protein. The residue at position 48 (K48) is an N6-acetyllysine; alternate. Residue K48 is modified to N6-succinyllysine; alternate. (2R)-3-phosphoglycerate-binding residues include S62, H63, G65, and R66. An N6-acetyllysine modification is found at K75. Y76 is modified (phosphotyrosine). K86 and K91 each carry N6-acetyllysine. N6-acetyllysine; alternate is present on K97. K97 bears the N6-(2-hydroxyisobutyryl)lysine; alternate mark. Residues L122 and R123 each contribute to the (2R)-3-phosphoglycerate site. K131 carries the post-translational modification N6-acetyllysine; alternate. N6-malonyllysine; alternate is present on K131. N6-acetyllysine is present on K146. Positions 170 and 171 each coordinate (2R)-3-phosphoglycerate. K191 bears the N6-succinyllysine mark. Phosphotyrosine is present on Y196. N6-acetyllysine is present on K199. Residue S203 is modified to Phosphoserine; by MAPK1. G214 is a binding site for ADP. Residue G214 participates in CDP binding. Residues A215 and K216 each coordinate AMP. Position 215 (A215) interacts with ATP. Residue A215 participates in Mg(2+) binding. K216 is subject to N6-(2-hydroxyisobutyryl)lysine. Residues A218 and D219 each contribute to the Mg(2+) site. CDP is bound at residue D219. Residue K220 coordinates AMP. ATP is bound at residue K220. At K220 the chain carries N6-(2-hydroxyisobutyryl)lysine. G238 serves as a coordination point for ADP. G238 lines the CDP pocket. Residue G239 coordinates AMP. G239 serves as a coordination point for ATP. N6-acetyllysine is present on residues K267 and K291. G313 serves as a coordination point for AMP. G313 serves as a coordination point for ATP. K323 is modified (N6-(2-hydroxyisobutyryl)lysine). 3 residues coordinate CDP: G338, V340, and F343. F343 contributes to the ADP binding site. Residue E344 coordinates AMP. E344 provides a ligand contact to ATP. The residue at position 361 (K361) is an N6-acetyllysine. Residues D375 and T376 each contribute to the ATP site. D375 is a Mg(2+) binding site.

This sequence belongs to the phosphoglycerate kinase family. Monomer. Interacts with kinase MAPK1/ERK2; the interaction is direct, occurs under hypoxic conditions, and promotes its interaction with PIN1. Interacts with peptidyl-prolyl cis-trans isomerase PIN1; the interaction is direct, occurs under hypoxic conditions, and targets the protein to the mitochondrion by promoting interactions with the TOM complex. Interacts with mitochondrial circRNA mcPGK1 (via its 2nd stem-loop); the interaction is direct and targets the protein to the mitochondrion by promoting interactions with the TOM complex. Interacts with pyruvate dehydrogenase kinase PDK1; the interaction is direct, occurs under hypoxic conditions and leads to PDK1-mediated inhibition of pyruvate dehydrogenase complex activity. Requires Mg(2+) as cofactor. Phosphorylated at Ser-203 by MAPK1/ERK2 under hypoxic conditions, which promotes its mitochondrial targeting. As to expression, mainly expressed in spermatogonia. Localized on the principle piece in the sperm (at protein level). Expression significantly decreased in the testis of elderly men.

Its subcellular location is the cytoplasm. It localises to the cytosol. It is found in the mitochondrion matrix. The enzyme catalyses (2R)-3-phosphoglycerate + ATP = (2R)-3-phospho-glyceroyl phosphate + ADP. It catalyses the reaction L-seryl-[protein] + ATP = O-phospho-L-seryl-[protein] + ADP + H(+). The protein operates within carbohydrate degradation; glycolysis; pyruvate from D-glyceraldehyde 3-phosphate: step 2/5. Specifically inhibited by heterocyclic compound CBR-470-0. Catalyzes one of the two ATP producing reactions in the glycolytic pathway via the reversible conversion of 1,3-diphosphoglycerate to 3-phosphoglycerate. Both L- and D- forms of purine and pyrimidine nucleotides can be used as substrates, but the activity is much lower on pyrimidines. In addition to its role as a glycolytic enzyme, it seems that PGK1 acts as a polymerase alpha cofactor protein (primer recognition protein). Acts as a protein kinase when localized to the mitochondrion where it phosphorylates pyruvate dehydrogenase kinase PDK1 to inhibit pyruvate dehydrogenase complex activity and suppress the formation of acetyl-coenzyme A from pyruvate, and consequently inhibit oxidative phosphorylation and promote glycolysis. May play a role in sperm motility. The polypeptide is Phosphoglycerate kinase 1 (PGK1) (Homo sapiens (Human)).